A 241-amino-acid polypeptide reads, in one-letter code: Neuroendocrine secretory protein 55 (241 aa).

An N-terminal signal peptide occupies residues 1–46 (MDRRSRPQLGRRARHNYNDLCPPIGRRAATALLWLSCSIALLRALA). The segment at 71–241 (AAQVFPEPPE…KRGAIPIRRH (171 aa)) is disordered. Residues 97 to 125 (EYQEEEFDYESETESESEIESETEFETES) are compositionally biased toward acidic residues. The segment covering 167–177 (PDASPSRAPPS) has biased composition (low complexity). The span at 182-198 (ESPRQGEEPEDKDPRDP) shows a compositional bias: basic and acidic residues. The span at 212-221 (QHRCKPKKPT) shows a compositional bias: basic residues.

The protein belongs to the NESP55 family. Binds keratan sulfate chains. In terms of processing, may be proteolytically processed to give rise to a number of active peptides. In terms of tissue distribution, highly expressed in adrenal medulla and anterior and posterior pituitary. In the brain, detected in hypothalamus, hippocampus, caudate nucleus, thalamus and, in significantly lower amounts, in the cerebellum.

The protein localises to the cytoplasmic vesicle. It is found in the secretory vesicle. It localises to the secreted. The polypeptide is Neuroendocrine secretory protein 55 (Bos taurus (Bovine)).